A 232-amino-acid polypeptide reads, in one-letter code: Ribosome maturation protein SDO1 homolog (232 aa).

This sequence belongs to the SDO1/SBDS family.

The chain is Ribosome maturation protein SDO1 homolog from Methanothermobacter thermautotrophicus (strain ATCC 29096 / DSM 1053 / JCM 10044 / NBRC 100330 / Delta H) (Methanobacterium thermoautotrophicum).